Reading from the N-terminus, the 494-residue chain is Sulfate adenylyltransferase subunit 1 (494 aa).

Residues 24-240 (TRPLRLITCG…LELATVRSAQ (217 aa)) enclose the tr-type G domain. Residues 33–40 (GSVDDGKS) form a G1 region. 33–40 (GSVDDGKS) lines the GTP pocket. Positions 91–95 (GITID) are G2. Residues 112–115 (DTPG) form a G3 region. GTP-binding positions include 112–116 (DTPGH) and 167–170 (NKID). Positions 167-170 (NKID) are G4. The segment at 204–206 (SAL) is G5.

It belongs to the TRAFAC class translation factor GTPase superfamily. Classic translation factor GTPase family. CysN/NodQ subfamily. In terms of assembly, heterodimer composed of CysD, the smaller subunit, and CysN.

It catalyses the reaction sulfate + ATP + H(+) = adenosine 5'-phosphosulfate + diphosphate. It functions in the pathway sulfur metabolism; hydrogen sulfide biosynthesis; sulfite from sulfate: step 1/3. Functionally, with CysD forms the ATP sulfurylase (ATPS) that catalyzes the adenylation of sulfate producing adenosine 5'-phosphosulfate (APS) and diphosphate, the first enzymatic step in sulfur assimilation pathway. APS synthesis involves the formation of a high-energy phosphoric-sulfuric acid anhydride bond driven by GTP hydrolysis by CysN coupled to ATP hydrolysis by CysD. The polypeptide is Sulfate adenylyltransferase subunit 1 (Rhizobium rhizogenes (strain K84 / ATCC BAA-868) (Agrobacterium radiobacter)).